The sequence spans 353 residues: Guanine nucleotide-binding protein G(q) subunit alpha (353 aa).

Residues Cys3 and Cys4 are each lipidated (S-palmitoyl cysteine). Residues 32 to 353 enclose the G-alpha domain; the sequence is RELKLLLLGT…QLNLKEYNLV (322 aa). The G1 motif stretch occupies residues 35 to 48; sequence KLLLLGTGESGKST. GTP contacts are provided by residues 40–47, 174–180, 199–203, 268–271, and Ala325; these read GTGESGKS, LRVRAPT, DVGGQ, and NKKD. Mg(2+) contacts are provided by Ser47 and Thr180. The G2 motif stretch occupies residues 172 to 180; the sequence is DILRVRAPT. A G3 motif region spans residues 195–204; the sequence is FRMVDVGGQR. Residues 264–271 form a G4 motif region; the sequence is ILFLNKKD. The segment at 323–328 is G5 motif; the sequence is TCATDT.

This sequence belongs to the G-alpha family. G(q) subfamily. G proteins are composed of 3 units; alpha, beta and gamma. The alpha chain contains the guanine nucleotide binding site.

In terms of biological role, guanine nucleotide-binding proteins (G proteins) are involved as modulators or transducers in various transmembrane signaling systems. This chain is Guanine nucleotide-binding protein G(q) subunit alpha, found in Homarus americanus (American lobster).